Here is a 44-residue protein sequence, read N- to C-terminus: Photosystem I reaction center subunit IX (44 aa).

Residues 7-27 traverse the membrane as a helical segment; sequence YLSVAPVASTLWFVALAGLLI.

It belongs to the PsaJ family.

Its subcellular location is the plastid. The protein localises to the chloroplast thylakoid membrane. Functionally, may help in the organization of the PsaE and PsaF subunits. This is Photosystem I reaction center subunit IX from Cicer arietinum (Chickpea).